We begin with the raw amino-acid sequence, 202 residues long: AYTLPPLDYAYTALEPHIDAQTMEIHHTKHHQTYINNVNAALEGTSFANEPVEALLQKLDSLPENLRGPVRNNGGGHANHSLFWKVLTPNGGGEPKGALADAIKSDIGGLDTFKEAFTKAALTRFGSGWAWLSVTPEKKLVVESTGNQDSPLSTGNTPILGLDVWEHAYYLKYQNRRPEYIGAFFNVVNWDEVSRRYQEALA.

Fe(3+) is bound by residues histidine 26, histidine 80, aspartate 163, and histidine 167. Mn(2+)-binding residues include histidine 26, histidine 80, aspartate 163, and histidine 167.

Belongs to the iron/manganese superoxide dismutase family. As to quaternary structure, homodimer. Requires Mn(2+) as cofactor. The cofactor is Fe(3+).

It carries out the reaction 2 superoxide + 2 H(+) = H2O2 + O2. Its function is as follows. Destroys superoxide anion radicals which are normally produced within the cells and which are toxic to biological systems. Catalyzes the dismutation of superoxide anion radicals into O2 and H2O2 by successive reduction and oxidation of the transition metal ion at the active site. This is Superoxide dismutase [Mn/Fe] (sodB) from Methylomonas sp. (strain J).